A 242-amino-acid chain; its full sequence is Biosynthetic peptidoglycan transglycosylase (242 aa).

A helical membrane pass occupies residues 19-39; the sequence is ILAALAVFWGGGIALFSVVPV.

Belongs to the glycosyltransferase 51 family.

The protein resides in the cell inner membrane. The catalysed reaction is [GlcNAc-(1-&gt;4)-Mur2Ac(oyl-L-Ala-gamma-D-Glu-L-Lys-D-Ala-D-Ala)](n)-di-trans,octa-cis-undecaprenyl diphosphate + beta-D-GlcNAc-(1-&gt;4)-Mur2Ac(oyl-L-Ala-gamma-D-Glu-L-Lys-D-Ala-D-Ala)-di-trans,octa-cis-undecaprenyl diphosphate = [GlcNAc-(1-&gt;4)-Mur2Ac(oyl-L-Ala-gamma-D-Glu-L-Lys-D-Ala-D-Ala)](n+1)-di-trans,octa-cis-undecaprenyl diphosphate + di-trans,octa-cis-undecaprenyl diphosphate + H(+). It participates in cell wall biogenesis; peptidoglycan biosynthesis. Its function is as follows. Peptidoglycan polymerase that catalyzes glycan chain elongation from lipid-linked precursors. The polypeptide is Biosynthetic peptidoglycan transglycosylase (Salmonella paratyphi A (strain ATCC 9150 / SARB42)).